We begin with the raw amino-acid sequence, 560 residues long: Hypermethylated in cancer 2 protein (560 aa).

A BTB domain is found at 24–87 (CDVIIVVENA…IYTGKLLSSD (64 aa)). Disordered stretches follow at residues 122–163 (RSLL…KTKR) and 183–367 (HCTT…GGRN). Composition is skewed to polar residues over residues 126–153 (NKPT…NQMS) and 183–203 (HCTT…NGSC). Residues 224 to 242 (EEVSPSSIPQESPQSASES) show a composition bias toward low complexity. Over residues 243–259 (TANSASFDENPNTQNLT) the composition is skewed to polar residues. The segment covering 296–308 (PKSEGKKGEDMER) has biased composition (basic and acidic residues). The span at 348 to 362 (ENGQEQSEESGQSEN) shows a compositional bias: low complexity. 5 consecutive C2H2-type zinc fingers follow at residues 387-409 (YVCI…VETH), 450-472 (FSCS…EKTH), 478-500 (FPCN…MRSH), 506-528 (FACE…MRVH), and 534-556 (YECQ…LRMH).

Belongs to the krueppel C2H2-type zinc-finger protein family. Hic subfamily.

It is found in the nucleus. Transcriptional repressor. In Danio rerio (Zebrafish), this protein is Hypermethylated in cancer 2 protein (hic2).